The primary structure comprises 211 residues: Peroxiredoxin (211 aa).

The Thioredoxin domain maps to 2–156 (PLLGDDFPEL…ILRAVKVLQI (155 aa)). The active-site Cysteine sulfenic acid (-SOH) intermediate is the cysteine 44. Arginine 119 is a substrate binding site. Cysteine 199 and cysteine 205 form a disulfide bridge.

It belongs to the peroxiredoxin family. Prx6 subfamily. In terms of assembly, homodecamer. Pentamer of dimers that assemble into a ring structure.

It localises to the cytoplasm. The enzyme catalyses a hydroperoxide + [thioredoxin]-dithiol = an alcohol + [thioredoxin]-disulfide + H2O. Its function is as follows. Thiol-specific peroxidase that catalyzes the reduction of hydrogen peroxide and organic hydroperoxides to water and alcohols, respectively. Plays a role in cell protection against oxidative stress by detoxifying peroxides. This chain is Peroxiredoxin, found in Chlorobaculum tepidum (strain ATCC 49652 / DSM 12025 / NBRC 103806 / TLS) (Chlorobium tepidum).